The sequence spans 440 residues: Thymidine phosphorylase (440 aa).

This sequence belongs to the thymidine/pyrimidine-nucleoside phosphorylase family. Homodimer.

It catalyses the reaction thymidine + phosphate = 2-deoxy-alpha-D-ribose 1-phosphate + thymine. It participates in pyrimidine metabolism; dTMP biosynthesis via salvage pathway; dTMP from thymine: step 1/2. The enzymes which catalyze the reversible phosphorolysis of pyrimidine nucleosides are involved in the degradation of these compounds and in their utilization as carbon and energy sources, or in the rescue of pyrimidine bases for nucleotide synthesis. The chain is Thymidine phosphorylase from Escherichia coli (strain K12 / DH10B).